The primary structure comprises 432 residues: ATP-dependent RNA helicase RhlB (432 aa).

A Q motif motif is present at residues 9–37 (QNFADLGLQPQVIDGLNAKGFIKCTPIQA). The Helicase ATP-binding domain maps to 40 to 219 (LPVLLAGQDI…FEHMQEPEHV (180 aa)). Position 53–60 (53–60 (AQTGTGKT)) interacts with ATP. Residues 165-168 (DEAD) carry the DEAD box motif. A Helicase C-terminal domain is found at 245 to 390 (ALLQTLIEEE…QSDYDASALL (146 aa)). The tract at residues 397 to 432 (LRLQRRPQQNRRNNNGQRQGGNRKHSRPRQPRNTQS) is disordered. Residues 417–426 (GNRKHSRPRQ) are compositionally biased toward basic residues.

The protein belongs to the DEAD box helicase family. RhlB subfamily. Component of the RNA degradosome, which is a multiprotein complex involved in RNA processing and mRNA degradation.

Its subcellular location is the cytoplasm. It carries out the reaction ATP + H2O = ADP + phosphate + H(+). Its function is as follows. DEAD-box RNA helicase involved in RNA degradation. Has RNA-dependent ATPase activity and unwinds double-stranded RNA. This Aliivibrio fischeri (strain MJ11) (Vibrio fischeri) protein is ATP-dependent RNA helicase RhlB.